Consider the following 309-residue polypeptide: Ribonuclease Z (309 aa).

His-63, His-65, Asp-67, His-68, His-143, Asp-213, and His-271 together coordinate Zn(2+). The Proton acceptor role is filled by Asp-67.

Belongs to the RNase Z family. As to quaternary structure, homodimer. Requires Zn(2+) as cofactor.

The catalysed reaction is Endonucleolytic cleavage of RNA, removing extra 3' nucleotides from tRNA precursor, generating 3' termini of tRNAs. A 3'-hydroxy group is left at the tRNA terminus and a 5'-phosphoryl group is left at the trailer molecule.. Zinc phosphodiesterase, which displays some tRNA 3'-processing endonuclease activity. Probably involved in tRNA maturation, by removing a 3'-trailer from precursor tRNA. This Phocaeicola vulgatus (strain ATCC 8482 / DSM 1447 / JCM 5826 / CCUG 4940 / NBRC 14291 / NCTC 11154) (Bacteroides vulgatus) protein is Ribonuclease Z.